A 211-amino-acid polypeptide reads, in one-letter code: Large ribosomal subunit protein eL13 (211 aa).

Lysine 16 carries the N6-acetyllysine modification. Phosphoserine is present on residues serine 52 and serine 77. Glycyl lysine isopeptide (Lys-Gly) (interchain with G-Cter in SUMO2) cross-links involve residues lysine 123 and lysine 145. Residue lysine 174 forms a Glycyl lysine isopeptide (Lys-Gly) (interchain with G-Cter in SUMO1); alternate linkage. Glycyl lysine isopeptide (Lys-Gly) (interchain with G-Cter in SUMO2); alternate cross-links involve residues lysine 174 and lysine 177. The residue at position 177 (lysine 177) is an N6-acetyllysine; alternate.

This sequence belongs to the eukaryotic ribosomal protein eL13 family. In terms of assembly, component of the 60S large ribosomal subunit (LSU).

The protein localises to the cytoplasm. In terms of biological role, component of the ribosome, a large ribonucleoprotein complex responsible for the synthesis of proteins in the cell. The small ribosomal subunit (SSU) binds messenger RNAs (mRNAs) and translates the encoded message by selecting cognate aminoacyl-transfer RNA (tRNA) molecules. The large subunit (LSU) contains the ribosomal catalytic site termed the peptidyl transferase center (PTC), which catalyzes the formation of peptide bonds, thereby polymerizing the amino acids delivered by tRNAs into a polypeptide chain. The nascent polypeptides leave the ribosome through a tunnel in the LSU and interact with protein factors that function in enzymatic processing, targeting, and the membrane insertion of nascent chains at the exit of the ribosomal tunnel. As part of the LSU, it is probably required for its formation and the maturation of rRNAs. Plays a role in bone development. In Bos taurus (Bovine), this protein is Large ribosomal subunit protein eL13 (RPL13).